Consider the following 251-residue polypeptide: ATP synthase delta chain, chloroplastic (251 aa).

Residues 1-64 (MASLQHTTAS…STGGALGARM (64 aa)) constitute a chloroplast transit peptide.

Belongs to the ATPase delta chain family. F-type ATPases have 2 components, CF(1) - the catalytic core - and CF(0) - the membrane proton channel. CF(1) has five subunits: alpha(3), beta(3), gamma(1), delta(1), epsilon(1). CF(0) has three main subunits: a, b and c.

The protein localises to the plastid. It localises to the chloroplast thylakoid membrane. Functionally, this protein seems to be part of the stalk that links CF(0) to CF(1). It either transmits conformational changes from CF(0) into CF(1) or is implicated in proton conduction. This is ATP synthase delta chain, chloroplastic (ATPD) from Pisum sativum (Garden pea).